We begin with the raw amino-acid sequence, 68 residues long: DNA-directed RNA polymerase subunit Rpo10 (68 aa).

Zn(2+) is bound by residues Cys7, Cys10, Cys44, and Cys45.

Belongs to the archaeal Rpo10/eukaryotic RPB10 RNA polymerase subunit family. Part of the RNA polymerase complex. Zn(2+) serves as cofactor.

The protein resides in the cytoplasm. The catalysed reaction is RNA(n) + a ribonucleoside 5'-triphosphate = RNA(n+1) + diphosphate. Its function is as follows. DNA-dependent RNA polymerase (RNAP) catalyzes the transcription of DNA into RNA using the four ribonucleoside triphosphates as substrates. The protein is DNA-directed RNA polymerase subunit Rpo10 of Methanococcus maripaludis (strain DSM 14266 / JCM 13030 / NBRC 101832 / S2 / LL).